The following is a 203-amino-acid chain: Glutathione S-transferase (203 aa).

A GST N-terminal domain is found at 2–79 (PDYKVYYFNV…YLANQVGLAG (78 aa)). Glutathione contacts are provided by residues Y8, W39, K43, 49-51 (GQM), and 63-64 (QS). A GST C-terminal domain is found at 81–203 (DDWENLMIDT…YIAKRPITEV (123 aa)).

The protein belongs to the GST superfamily. Sigma family. In terms of assembly, homodimer.

The catalysed reaction is RX + glutathione = an S-substituted glutathione + a halide anion + H(+). Its function is as follows. Conjugation of reduced glutathione to a wide number of exogenous and endogenous hydrophobic electrophiles. This Anopheles gambiae (African malaria mosquito) protein is Glutathione S-transferase (GstS1).